The primary structure comprises 122 residues: Large ribosomal subunit protein uL18 (122 aa).

Residues 1 to 19 (MSKLSRKQQTQKRHKRLRR) show a composition bias toward basic residues. A disordered region spans residues 1–27 (MSKLSRKQQTQKRHKRLRRNLSGTESR).

This sequence belongs to the universal ribosomal protein uL18 family. In terms of assembly, part of the 50S ribosomal subunit; part of the 5S rRNA/L5/L18/L25 subcomplex. Contacts the 5S and 23S rRNAs.

This is one of the proteins that bind and probably mediate the attachment of the 5S RNA into the large ribosomal subunit, where it forms part of the central protuberance. In Prochlorococcus marinus (strain NATL1A), this protein is Large ribosomal subunit protein uL18.